The chain runs to 271 residues: Isoprenyl transferase (271 aa).

Aspartate 35 is a catalytic residue. Aspartate 35 is a binding site for Mg(2+). Substrate-binding positions include 36–39 (GNGR), tryptophan 40, arginine 48, histidine 52, and 80–82 (STE). The Proton acceptor role is filled by asparagine 83. Substrate contacts are provided by residues tryptophan 84, arginine 86, arginine 207, and 213–215 (RIS). Glutamate 226 contacts Mg(2+).

Belongs to the UPP synthase family. In terms of assembly, homodimer. It depends on Mg(2+) as a cofactor.

In terms of biological role, catalyzes the condensation of isopentenyl diphosphate (IPP) with allylic pyrophosphates generating different type of terpenoids. This chain is Isoprenyl transferase, found in Enterococcus faecalis (strain ATCC 700802 / V583).